We begin with the raw amino-acid sequence, 315 residues long: Methionyl-tRNA formyltransferase (315 aa).

(6S)-5,6,7,8-tetrahydrofolate is bound at residue 110–113 (SLLP).

Belongs to the Fmt family.

It catalyses the reaction L-methionyl-tRNA(fMet) + (6R)-10-formyltetrahydrofolate = N-formyl-L-methionyl-tRNA(fMet) + (6S)-5,6,7,8-tetrahydrofolate + H(+). Attaches a formyl group to the free amino group of methionyl-tRNA(fMet). The formyl group appears to play a dual role in the initiator identity of N-formylmethionyl-tRNA by promoting its recognition by IF2 and preventing the misappropriation of this tRNA by the elongation apparatus. The protein is Methionyl-tRNA formyltransferase of Lactobacillus delbrueckii subsp. bulgaricus (strain ATCC BAA-365 / Lb-18).